The chain runs to 132 residues: Aspartate 1-decarboxylase (132 aa).

The active-site Schiff-base intermediate with substrate; via pyruvic acid is the S25. Pyruvic acid (Ser) is present on S25. Residue T57 coordinates substrate. Y58 serves as the catalytic Proton donor. A substrate-binding site is contributed by 73 to 75 (GAA).

It belongs to the PanD family. Heterooctamer of four alpha and four beta subunits. Pyruvate is required as a cofactor. Post-translationally, is synthesized initially as an inactive proenzyme, which is activated by self-cleavage at a specific serine bond to produce a beta-subunit with a hydroxyl group at its C-terminus and an alpha-subunit with a pyruvoyl group at its N-terminus.

It localises to the cytoplasm. It carries out the reaction L-aspartate + H(+) = beta-alanine + CO2. Its pathway is cofactor biosynthesis; (R)-pantothenate biosynthesis; beta-alanine from L-aspartate: step 1/1. In terms of biological role, catalyzes the pyruvoyl-dependent decarboxylation of aspartate to produce beta-alanine. In Geotalea uraniireducens (strain Rf4) (Geobacter uraniireducens), this protein is Aspartate 1-decarboxylase.